The primary structure comprises 150 residues: Arginine repressor (150 aa).

The protein belongs to the ArgR family.

The protein localises to the cytoplasm. It participates in amino-acid biosynthesis; L-arginine biosynthesis [regulation]. Functionally, regulates arginine biosynthesis genes. This is Arginine repressor from Clostridium botulinum (strain ATCC 19397 / Type A).